Reading from the N-terminus, the 545-residue chain is CTP synthase (545 aa).

The tract at residues methionine 1–leucine 266 is amidoligase domain. Serine 14 contributes to the CTP binding site. Serine 14 provides a ligand contact to UTP. ATP-binding positions include serine 15–isoleucine 20 and aspartate 72. Mg(2+) contacts are provided by aspartate 72 and glutamate 140. Residues aspartate 147–glutamate 149, lysine 187–glutamine 192, and lysine 223 each bind CTP. Residues lysine 187–glutamine 192 and lysine 223 each bind UTP. ATP is bound at residue lysine 239 to valine 241. One can recognise a Glutamine amidotransferase type-1 domain in the interval threonine 291 to arginine 542. Position 352 (glycine 352) interacts with L-glutamine. Cysteine 379 acts as the Nucleophile; for glutamine hydrolysis in catalysis. L-glutamine is bound by residues leucine 380 to glutamine 383, glutamate 403, and arginine 470. Active-site residues include histidine 515 and glutamate 517.

This sequence belongs to the CTP synthase family. In terms of assembly, homotetramer.

It carries out the reaction UTP + L-glutamine + ATP + H2O = CTP + L-glutamate + ADP + phosphate + 2 H(+). It catalyses the reaction L-glutamine + H2O = L-glutamate + NH4(+). The catalysed reaction is UTP + NH4(+) + ATP = CTP + ADP + phosphate + 2 H(+). The protein operates within pyrimidine metabolism; CTP biosynthesis via de novo pathway; CTP from UDP: step 2/2. Allosterically activated by GTP, when glutamine is the substrate; GTP has no effect on the reaction when ammonia is the substrate. The allosteric effector GTP functions by stabilizing the protein conformation that binds the tetrahedral intermediate(s) formed during glutamine hydrolysis. Inhibited by the product CTP, via allosteric rather than competitive inhibition. Functionally, catalyzes the ATP-dependent amination of UTP to CTP with either L-glutamine or ammonia as the source of nitrogen. Regulates intracellular CTP levels through interactions with the four ribonucleotide triphosphates. In Klebsiella pneumoniae subsp. pneumoniae (strain ATCC 700721 / MGH 78578), this protein is CTP synthase.